Reading from the N-terminus, the 204-residue chain is MVEVGGGAAEAAAGRRWRLADERCDLRAAETEYVRRFHRHEPRDHQCSSAVAKHIKAPVHLVWSLVRRFDQPQLFKPFVSRCEMKGNIEIGSVREVNVKSGLPATRSTERLELLDDNEHILSVRFVGGDHRLKNYSSILTVHPEVIDGRPGTLVIESFVVDVPEGNTKDETCYFVEALLKCNLKSLAEVSERLVVKDQTEPLDR.

Residues 40 to 191 (HEPRDHQCSS…NLKSLAEVSE (152 aa)) are START-like. Cys47 and Cys172 form a disulfide bridge. Abscisate is bound by residues Lys76, 104 to 109 (ATRSTE), 131 to 137 (RLKNYSS), and Glu156. Residues 100–104 (SGLPA) carry the Gate loop motif. The short motif at 130-132 (HRL) is the Latch loop element.

Belongs to the PYR/PYL/RCAR abscisic acid intracellular receptor family. In terms of assembly, monomer. Interacts with PP2C50. Binding to PP2C50 is dependent on the presence of abscisic acid (ABA). Interacts with PP2C30 and PP2C53.

The protein localises to the cytoplasm. Its subcellular location is the cytosol. The protein resides in the nucleus. Involved in abscisic acid (ABA) signaling during seed germination and abiotic stress response. Acts as a positive regulator of ABA-mediated inhibition of seed germination, and tolerance to drought and cold stresses. Together with PP2C50 and SAPK10, may form an ABA signaling module involved in stress response. Inhibits the protein phosphatases PP2C06 and PP2C09 when activated by abscisic acid (ABA). This Oryza sativa subsp. japonica (Rice) protein is Abscisic acid receptor PYL3.